Consider the following 130-residue polypeptide: Ribosome biogenesis inhibitor MINAS-60 (130 aa).

The segment at 61 to 130 (SRVRRIPTRP…RRRRPVTSSC (70 aa)) is disordered. A compositionally biased stretch (basic residues) spans 109-130 (KGRRRRRRRMRRRRRRPVTSSC).

As to quaternary structure, interacts with 60S ribosome assembly factors GTPBP4 and MRTO4.

The protein resides in the nucleus. Its subcellular location is the nucleolus. In terms of biological role, acts as a late-stage inhibitor of pre-60S ribosome assembly by preventing pre-60S ribosome export from nucleus. The chain is Ribosome biogenesis inhibitor MINAS-60 from Homo sapiens (Human).